Here is a 444-residue protein sequence, read N- to C-terminus: Homocysteine/cysteine synthase (444 aa).

N6-(pyridoxal phosphate)lysine is present on lysine 208.

Belongs to the trans-sulfuration enzymes family. In terms of assembly, homotetramer. It depends on pyridoxal 5'-phosphate as a cofactor.

The protein localises to the cytoplasm. It catalyses the reaction O-acetyl-L-homoserine + methanethiol = L-methionine + acetate + H(+). The catalysed reaction is O-acetyl-L-homoserine + hydrogen sulfide = L-homocysteine + acetate. The enzyme catalyses O-acetyl-L-serine + hydrogen sulfide = L-cysteine + acetate. It functions in the pathway amino-acid biosynthesis; L-methionine biosynthesis via de novo pathway; L-homocysteine from O-acetyl-L-homoserine. It participates in amino-acid biosynthesis; L-cysteine biosynthesis; L-cysteine from L-serine: step 2/2. Catalyzes the conversion of O-acetyl-L-homoserine (OAH) into homocysteine in the methionine biosynthesis pathway. Also catalyzes the conversion of O-acetylserine (OAS) into cysteine, the last step in the cysteine biosynthesis pathway. The sequence is that of Homocysteine/cysteine synthase (MET17) from Kluyveromyces lactis (strain ATCC 8585 / CBS 2359 / DSM 70799 / NBRC 1267 / NRRL Y-1140 / WM37) (Yeast).